Here is a 266-residue protein sequence, read N- to C-terminus: GTP cyclohydrolase FolE2 1 (266 aa).

The protein belongs to the GTP cyclohydrolase IV family.

It catalyses the reaction GTP + H2O = 7,8-dihydroneopterin 3'-triphosphate + formate + H(+). Its pathway is cofactor biosynthesis; 7,8-dihydroneopterin triphosphate biosynthesis; 7,8-dihydroneopterin triphosphate from GTP: step 1/1. Its function is as follows. Converts GTP to 7,8-dihydroneopterin triphosphate. The protein is GTP cyclohydrolase FolE2 1 of Dechloromonas aromatica (strain RCB).